The sequence spans 513 residues: Keratin, type II cuticular Hb2 (513 aa).

Positions 1–120 (MSYHSFQPGS…PTVQRVKRDE (120 aa)) are head. In terms of domain architecture, IF rod spans 120–431 (EKEQIKCLNN…RLLEGEEHRL (312 aa)). Positions 121-155 (KEQIKCLNNRFASFINKVRFLEQKNKLLETKWNFM) are coil 1A. The tract at residues 156–165 (QQQRCCQTNI) is linker 1. Positions 166 to 266 (EPIFEGYISA…YEEEICLLQS (101 aa)) are coil 1B. The tract at residues 267 to 283 (QISETSVIVKMDNSREL) is linker 12. A coil 2 region spans residues 284–427 (DVDGIIAEIK…ATYRRLLEGE (144 aa)). Residues 428 to 513 (EHRLCEGIGP…AGGSSPSHKH (86 aa)) are tail.

It belongs to the intermediate filament family. Heterotetramer of two type I and two type II keratins.

The polypeptide is Keratin, type II cuticular Hb2 (KRT82) (Homo sapiens (Human)).